Consider the following 792-residue polypeptide: Phosphoenolpyruvate synthase (792 aa).

H421 acts as the Tele-phosphohistidine intermediate in catalysis. Positions 511, 578, 680, 701, 702, 703, and 704 each coordinate substrate. Mg(2+) is bound at residue E680. D704 contributes to the Mg(2+) binding site. Residue C751 is the Proton donor of the active site.

The protein belongs to the PEP-utilizing enzyme family. As to quaternary structure, homodimer. Requires Mg(2+) as cofactor.

It catalyses the reaction pyruvate + ATP + H2O = phosphoenolpyruvate + AMP + phosphate + 2 H(+). The protein operates within carbohydrate biosynthesis; gluconeogenesis. Its activity is regulated as follows. Activated by a Pi-dependent pyrophosphorylation and inactivated by an ADP-dependent phosphorylation on a regulatory threonine. Both reactions are mediated by the bifunctional serine/threonine kinase and phosphorylase PpsR. Functionally, catalyzes the phosphorylation of pyruvate to phosphoenolpyruvate. The polypeptide is Phosphoenolpyruvate synthase (ppsA) (Escherichia coli (strain K12)).